The following is a 192-amino-acid chain: dTTP/UTP pyrophosphatase (192 aa).

Catalysis depends on D72, which acts as the Proton acceptor.

This sequence belongs to the Maf family. YhdE subfamily. The cofactor is a divalent metal cation.

The protein resides in the cytoplasm. The enzyme catalyses dTTP + H2O = dTMP + diphosphate + H(+). It carries out the reaction UTP + H2O = UMP + diphosphate + H(+). Functionally, nucleoside triphosphate pyrophosphatase that hydrolyzes dTTP and UTP. May have a dual role in cell division arrest and in preventing the incorporation of modified nucleotides into cellular nucleic acids. The protein is dTTP/UTP pyrophosphatase of Geobacter metallireducens (strain ATCC 53774 / DSM 7210 / GS-15).